Consider the following 131-residue polypeptide: uncharacterized protein (131 aa).

This is an uncharacterized protein from Escherichia coli.